Consider the following 250-residue polypeptide: Triosephosphate isomerase (250 aa).

Substrate is bound at residue 9 to 11; sequence NWK. Histidine 95 (electrophile) is an active-site residue. The active-site Proton acceptor is glutamate 167. Substrate is bound by residues glycine 173, serine 213, and 234–235; that span reads GG.

The protein belongs to the triosephosphate isomerase family. As to quaternary structure, homodimer.

Its subcellular location is the cytoplasm. The enzyme catalyses D-glyceraldehyde 3-phosphate = dihydroxyacetone phosphate. The protein operates within carbohydrate biosynthesis; gluconeogenesis. It participates in carbohydrate degradation; glycolysis; D-glyceraldehyde 3-phosphate from glycerone phosphate: step 1/1. In terms of biological role, involved in the gluconeogenesis. Catalyzes stereospecifically the conversion of dihydroxyacetone phosphate (DHAP) to D-glyceraldehyde-3-phosphate (G3P). This Flavobacterium johnsoniae (strain ATCC 17061 / DSM 2064 / JCM 8514 / BCRC 14874 / CCUG 350202 / NBRC 14942 / NCIMB 11054 / UW101) (Cytophaga johnsonae) protein is Triosephosphate isomerase.